The chain runs to 189 residues: Putative manganese efflux pump MntP (189 aa).

6 helical membrane passes run 3-23 (PVAT…AAIG), 41-61 (LIFG…GKAA), 62-82 (AQYV…VLGA), 104-124 (FWLL…VGAG), 132-152 (IYST…IGVM), and 168-188 (AGGI…LNIF).

This sequence belongs to the MntP (TC 9.B.29) family.

It is found in the cell inner membrane. Functionally, probably functions as a manganese efflux pump. The sequence is that of Putative manganese efflux pump MntP from Paraburkholderia phytofirmans (strain DSM 17436 / LMG 22146 / PsJN) (Burkholderia phytofirmans).